Here is a 309-residue protein sequence, read N- to C-terminus: Serpentine receptor class gamma-47 (309 aa).

5 helical membrane-spanning segments follow: residues 22-42 (IVQM…LFLF), 140-160 (FKLY…VLPL), 190-210 (IYSS…IFYI), 230-250 (LITL…ILMA), and 272-292 (ISSD…DVGI).

Belongs to the nematode receptor-like protein srg family.

Its subcellular location is the membrane. In Caenorhabditis elegans, this protein is Serpentine receptor class gamma-47 (srg-47).